Consider the following 471-residue polypeptide: MNRLFFSKIALWLLDFLTFNISFLLSLFVISYYHNGYEKYLPIYEIDDRTYIHAVLAGICVGWFAIRLRHYTYRKPFWFELKEIFRTLIIFAIFELAIVAFPKLYFSRYLWALTWGITFLLFPLARVLVKKFLIKSGWFLRDTIMIGSGDNAFDVYNALRDEPYLGFQVTHFISVSNISNNVKELNIPILNSMSSWTSVTKKTDQFIIALEDDEEVDRNNWLRYFSTNGYRSVSVIPTLRGLPLYNTDMSFMFSHEIMLLQMNNNLAKLSSRILKRTMDIVVGSLAIIIFSPVLLYLYFAVKKDGGNAIYGHPRIGRNGKTFNCLKFRTMAVNSKEVLDELLRTDPEARAEWEKDFKLKNDPRITKIGAFIRKTSLDELPQLFNVLKGEMSLVGPRPIVIDELERYEENVDYYLMARPGMTGLWQVSGRNNIDYNTRVYFDSWYVKNWSLWNDIAILFKTMNVVLNRDGAY.

4 helical membrane-spanning segments follow: residues 10–30 (ALWLLDFLTFNISFLLSLFVI), 46–66 (IDDRTYIHAVLAGICVGWFAI), 87–107 (TLIIFAIFELAIVAFPKLYFS), and 280–300 (IVVGSLAIIIFSPVLLYLYFA).

It belongs to the bacterial sugar transferase family.

Its subcellular location is the cell membrane. It participates in glycan metabolism; exopolysaccharide biosynthesis. May function as a sugar transferase. This is an uncharacterized protein from Haemophilus influenzae (strain ATCC 51907 / DSM 11121 / KW20 / Rd).